The chain runs to 555 residues: Formate--tetrahydrofolate ligase (555 aa).

Position 65-72 (65-72 (TPAGEGKS)) interacts with ATP.

This sequence belongs to the formate--tetrahydrofolate ligase family.

The enzyme catalyses (6S)-5,6,7,8-tetrahydrofolate + formate + ATP = (6R)-10-formyltetrahydrofolate + ADP + phosphate. It participates in one-carbon metabolism; tetrahydrofolate interconversion. The polypeptide is Formate--tetrahydrofolate ligase (Staphylococcus haemolyticus (strain JCSC1435)).